Reading from the N-terminus, the 425-residue chain is Histidine--tRNA ligase (425 aa).

This sequence belongs to the class-II aminoacyl-tRNA synthetase family. As to quaternary structure, homodimer.

It localises to the cytoplasm. It carries out the reaction tRNA(His) + L-histidine + ATP = L-histidyl-tRNA(His) + AMP + diphosphate + H(+). The chain is Histidine--tRNA ligase from Streptococcus uberis (strain ATCC BAA-854 / 0140J).